The sequence spans 98 residues: Co-chaperonin GroES (98 aa).

Belongs to the GroES chaperonin family. Heptamer of 7 subunits arranged in a ring. Interacts with the chaperonin GroEL.

The protein localises to the cytoplasm. Its function is as follows. Together with the chaperonin GroEL, plays an essential role in assisting protein folding. The GroEL-GroES system forms a nano-cage that allows encapsulation of the non-native substrate proteins and provides a physical environment optimized to promote and accelerate protein folding. GroES binds to the apical surface of the GroEL ring, thereby capping the opening of the GroEL channel. The chain is Co-chaperonin GroES from Beutenbergia cavernae (strain ATCC BAA-8 / DSM 12333 / CCUG 43141 / JCM 11478 / NBRC 16432 / NCIMB 13614 / HKI 0122).